The primary structure comprises 231 residues: Ribonuclease 3 (231 aa).

Residues 5–134 (QEKLKNDYGL…FLGALFIDQG (130 aa)) enclose the RNase III domain. A Mg(2+)-binding site is contributed by Glu47. The active site involves Asp51. 2 residues coordinate Mg(2+): Asn120 and Glu123. Glu123 is an active-site residue. A DRBM domain is found at 160–229 (DYKTELQEVL…AENAIKGQNH (70 aa)).

Belongs to the ribonuclease III family. As to quaternary structure, homodimer. Mg(2+) serves as cofactor.

It localises to the cytoplasm. It carries out the reaction Endonucleolytic cleavage to 5'-phosphomonoester.. In terms of biological role, digests double-stranded RNA. Involved in the processing of primary rRNA transcript to yield the immediate precursors to the large and small rRNAs (23S and 16S). Processes some mRNAs, and tRNAs when they are encoded in the rRNA operon. Processes pre-crRNA and tracrRNA of type II CRISPR loci if present in the organism. The chain is Ribonuclease 3 from Lactococcus lactis subsp. cremoris (strain SK11).